A 139-amino-acid polypeptide reads, in one-letter code: Galactoside-binding soluble lectin 13 (139 aa).

In terms of domain architecture, Galectin spans 6 to 138 (VPYKLPVSLS…DISLTSVCVC (133 aa)).

Homodimer; disulfide-linked. Detected in adult and fetal spleen, fetal kidney, adult urinary bladder and placenta. Placental expression originates predominantly from the syncytiotrophoblast.

It localises to the cytoplasm. The protein localises to the nucleus matrix. Binds beta-galactoside and lactose. Strong inducer of T-cell apoptosis. Has hemagglutinating activity towards chicken erythrocytes. The polypeptide is Galactoside-binding soluble lectin 13 (LGALS13) (Homo sapiens (Human)).